The primary structure comprises 146 residues: Regulator of ribonuclease activity B (146 aa).

The interval 110-146 (WGTYFEDPDGEEEEGDEFDQDDEDGPADRDEVPATRH) is disordered. A compositionally biased stretch (acidic residues) spans 115 to 134 (EDPDGEEEEGDEFDQDDEDG). A compositionally biased stretch (basic and acidic residues) spans 135-146 (PADRDEVPATRH).

This sequence belongs to the RraB family. As to quaternary structure, interacts with the C-terminal region of Rne.

It localises to the cytoplasm. Its function is as follows. Globally modulates RNA abundance by binding to RNase E (Rne) and regulating its endonucleolytic activity. Can modulate Rne action in a substrate-dependent manner by altering the composition of the degradosome. This Sodalis glossinidius (strain morsitans) protein is Regulator of ribonuclease activity B.